Consider the following 215-residue polypeptide: MGKVYDWFEERLEIQAIADDITSKYVPPHVNIFYCIGGIVFTSFLIQVASGFAMTFYYRPTVAEAFSSVEYIMTDVNFGWLIRSIHRWSASMMVLMLILHMFRVYLTGGFKKPRELTWVTGVILAVLTVSFGVTGYSLPWDQIGYWAVKIVTGVPEAIPVVGGSIVELLRGGVSVGQSTLTRFYSLHTFVLPLLTAVFMLMHFLMIRKQGISGPL.

Residues 32–52 traverse the membrane as a helical segment; the sequence is IFYCIGGIVFTSFLIQVASGF. C35 is a binding site for heme c. Heme b-binding residues include H86 and H100. The next 3 membrane-spanning stretches (helical) occupy residues 90-110, 116-136, and 186-206; these read ASMM…TGGF, LTWV…VTGY, and LHTF…FLMI. Heme b is bound by residues H187 and H202.

The protein belongs to the cytochrome b family. PetB subfamily. The 4 large subunits of the cytochrome b6-f complex are cytochrome b6, subunit IV (17 kDa polypeptide, PetD), cytochrome f and the Rieske protein, while the 4 small subunits are PetG, PetL, PetM and PetN. The complex functions as a dimer. The cofactor is heme b. It depends on heme c as a cofactor.

It is found in the plastid. It localises to the chloroplast thylakoid membrane. Component of the cytochrome b6-f complex, which mediates electron transfer between photosystem II (PSII) and photosystem I (PSI), cyclic electron flow around PSI, and state transitions. The polypeptide is Cytochrome b6 (Gracilaria tenuistipitata var. liui (Red alga)).